A 140-amino-acid polypeptide reads, in one-letter code: Nucleoside diphosphate kinase (140 aa).

ATP is bound by residues lysine 11, phenylalanine 59, arginine 87, threonine 93, arginine 104, and asparagine 114. Histidine 117 acts as the Pros-phosphohistidine intermediate in catalysis.

It belongs to the NDK family. In terms of assembly, homotetramer. The cofactor is Mg(2+).

It is found in the cytoplasm. The catalysed reaction is a 2'-deoxyribonucleoside 5'-diphosphate + ATP = a 2'-deoxyribonucleoside 5'-triphosphate + ADP. It carries out the reaction a ribonucleoside 5'-diphosphate + ATP = a ribonucleoside 5'-triphosphate + ADP. Its function is as follows. Major role in the synthesis of nucleoside triphosphates other than ATP. The ATP gamma phosphate is transferred to the NDP beta phosphate via a ping-pong mechanism, using a phosphorylated active-site intermediate. The sequence is that of Nucleoside diphosphate kinase from Rhizobium meliloti (strain 1021) (Ensifer meliloti).